A 311-amino-acid chain; its full sequence is MSYQDLKKCKIITAFITPFHEDGSINFDAIPALIEHLLAHHTDGILLAGTTAESPTLTHDEELELFAAVQKVVNGRVPLIAGVGTNDTRDSIEFVKEVAEFGGFAAGLAIVPYYNKPSQEGMYQHFKTIADASDLPIIIYNIPGRVVVELTPETMLRLADHPNIIGVKECTSLANMAYLIEHKPEEFLIYTGEDGDAFHAMNLGADGVISVASHTNGDEMHEMFTAIAESDMKKAAAIQRKFIPKVNALFSYPSPAPVKAILNYMGFEAGPTRLPLVPAPEEDAKRIIKVVVDGDYEATKATVTGVLRPDY.

Position 51 (Thr-51) interacts with pyruvate. Catalysis depends on Tyr-140, which acts as the Proton donor/acceptor. Residue Lys-168 is the Schiff-base intermediate with substrate of the active site. Ile-209 is a binding site for pyruvate.

It belongs to the DapA family. In terms of assembly, homotetramer; dimer of dimers.

Its subcellular location is the cytoplasm. The enzyme catalyses L-aspartate 4-semialdehyde + pyruvate = (2S,4S)-4-hydroxy-2,3,4,5-tetrahydrodipicolinate + H2O + H(+). The protein operates within amino-acid biosynthesis; L-lysine biosynthesis via DAP pathway; (S)-tetrahydrodipicolinate from L-aspartate: step 3/4. In terms of biological role, catalyzes the condensation of (S)-aspartate-beta-semialdehyde [(S)-ASA] and pyruvate to 4-hydroxy-tetrahydrodipicolinate (HTPA). The protein is 4-hydroxy-tetrahydrodipicolinate synthase of Streptococcus pneumoniae (strain Hungary19A-6).